Consider the following 291-residue polypeptide: N-acetylmannosamine kinase (291 aa).

ATP is bound by residues 5-12 (AIDIGGTK) and 132-139 (GVGGGVVS). 4 residues coordinate Zn(2+): His156, Cys166, Cys168, and Cys173.

It belongs to the ROK (NagC/XylR) family. NanK subfamily. Homodimer.

The enzyme catalyses an N-acyl-D-mannosamine + ATP = an N-acyl-D-mannosamine 6-phosphate + ADP + H(+). It participates in amino-sugar metabolism; N-acetylneuraminate degradation; D-fructose 6-phosphate from N-acetylneuraminate: step 2/5. Its function is as follows. Catalyzes the phosphorylation of N-acetylmannosamine (ManNAc) to ManNAc-6-P. This Escherichia coli O157:H7 protein is N-acetylmannosamine kinase.